Here is a 317-residue protein sequence, read N- to C-terminus: ADP-L-glycero-D-manno-heptose-6-epimerase (317 aa).

NADP(+) contacts are provided by residues 10–11, 31–32, Lys38, Lys53, 76–80, and Asn93; these read FI, DD, and QGACS. Residue Tyr140 is the Proton acceptor of the active site. Lys144 contributes to the NADP(+) binding site. Asn169 contacts substrate. Positions 170 and 178 each coordinate NADP(+). Lys178 acts as the Proton acceptor in catalysis. Substrate is bound by residues Ala180, His187, 201–204, Arg214, and Tyr278; that span reads FEGC.

It belongs to the NAD(P)-dependent epimerase/dehydratase family. HldD subfamily. As to quaternary structure, homopentamer. It depends on NADP(+) as a cofactor.

It catalyses the reaction ADP-D-glycero-beta-D-manno-heptose = ADP-L-glycero-beta-D-manno-heptose. It functions in the pathway nucleotide-sugar biosynthesis; ADP-L-glycero-beta-D-manno-heptose biosynthesis; ADP-L-glycero-beta-D-manno-heptose from D-glycero-beta-D-manno-heptose 7-phosphate: step 4/4. Functionally, catalyzes the interconversion between ADP-D-glycero-beta-D-manno-heptose and ADP-L-glycero-beta-D-manno-heptose via an epimerization at carbon 6 of the heptose. In Nitrosococcus oceani (strain ATCC 19707 / BCRC 17464 / JCM 30415 / NCIMB 11848 / C-107), this protein is ADP-L-glycero-D-manno-heptose-6-epimerase.